The sequence spans 278 residues: Rhomboid protease GlpG (278 aa).

The next 6 membrane-spanning stretches (helical) occupy residues 94–114, 143–163, 175–195, 196–216, 224–241, and 245–267; these read AGPLTLSVMVLCIAIYILMLI, AFLHFSLLHILFNLMWWWYLG, LLVLTIVSAVFSGWGQSLFSG, ANFGGLSGVVYALMGYVWLTG, ISLPRGLMAFSVLWLIAG, and ILGLSIANAAHVSGLIIGLLMAF. The active-site Nucleophile is Ser-202. His-255 is an active-site residue.

This sequence belongs to the peptidase S54 family.

The protein localises to the cell inner membrane. It catalyses the reaction Cleaves type-1 transmembrane domains using a catalytic dyad composed of serine and histidine that are contributed by different transmembrane domains.. Functionally, rhomboid-type serine protease that catalyzes intramembrane proteolysis. This chain is Rhomboid protease GlpG, found in Yersinia pestis bv. Antiqua (strain Antiqua).